The primary structure comprises 300 residues: Glutamyl-Q tRNA(Asp) synthetase (300 aa).

L-glutamate contacts are provided by residues 8–12 and Asp-44; that span reads RFAPT. The short motif at 11–21 is the 'HIGH' region element; sequence PTPSGDLHLGS. Residues Cys-100, Cys-102, Tyr-122, and Cys-126 each contribute to the Zn(2+) site. 2 residues coordinate L-glutamate: Tyr-181 and Arg-199. Residues 237-241 carry the 'KMSKS' region motif; that stretch reads KLSKQ. An ATP-binding site is contributed by Lys-240.

It belongs to the class-I aminoacyl-tRNA synthetase family. GluQ subfamily. It depends on Zn(2+) as a cofactor.

Functionally, catalyzes the tRNA-independent activation of glutamate in presence of ATP and the subsequent transfer of glutamate onto a tRNA(Asp). Glutamate is transferred on the 2-amino-5-(4,5-dihydroxy-2-cyclopenten-1-yl) moiety of the queuosine in the wobble position of the QUC anticodon. The polypeptide is Glutamyl-Q tRNA(Asp) synthetase (Synechococcus sp. (strain ATCC 27144 / PCC 6301 / SAUG 1402/1) (Anacystis nidulans)).